We begin with the raw amino-acid sequence, 634 residues long: DNA mismatch repair protein MutL (634 aa).

Residues 406-427 (HTHHNDTKGSVHTKSFSARSSS) form a disordered region.

It belongs to the DNA mismatch repair MutL/HexB family.

In terms of biological role, this protein is involved in the repair of mismatches in DNA. It is required for dam-dependent methyl-directed DNA mismatch repair. May act as a 'molecular matchmaker', a protein that promotes the formation of a stable complex between two or more DNA-binding proteins in an ATP-dependent manner without itself being part of a final effector complex. The protein is DNA mismatch repair protein MutL of Anaplasma phagocytophilum (strain HZ).